The following is a 130-amino-acid chain: Small ribosomal subunit protein uS9 (130 aa).

This sequence belongs to the universal ribosomal protein uS9 family.

This is Small ribosomal subunit protein uS9 from Cupriavidus necator (strain ATCC 17699 / DSM 428 / KCTC 22496 / NCIMB 10442 / H16 / Stanier 337) (Ralstonia eutropha).